A 162-amino-acid polypeptide reads, in one-letter code: Regulator of sigma D (162 aa).

This sequence belongs to the Rsd/AlgQ family. In terms of assembly, interacts with RpoD.

Its subcellular location is the cytoplasm. In terms of biological role, binds RpoD and negatively regulates RpoD-mediated transcription activation by preventing the interaction between the primary sigma factor RpoD with the catalytic core of the RNA polymerase and with promoter DNA. May be involved in replacement of the RNA polymerase sigma subunit from RpoD to RpoS during the transition from exponential growth to the stationary phase. In Salmonella paratyphi A (strain ATCC 9150 / SARB42), this protein is Regulator of sigma D.